Reading from the N-terminus, the 170-residue chain is Small ribosomal subunit protein bS16 (170 aa).

The segment at 114 to 170 (EGGPTTEAAKPKKKAATSGAKKAAKAAEPEAAAPEAAEPEAAAPAEGGEQAESSTES) is disordered. Residues 142–170 (PEAAAPEAAEPEAAAPAEGGEQAESSTES) show a composition bias toward low complexity.

Belongs to the bacterial ribosomal protein bS16 family.

This chain is Small ribosomal subunit protein bS16, found in Mycobacterium avium (strain 104).